The chain runs to 79 residues: uncharacterized protein (79 aa).

Positions 4–43 (QENEDLRKQLVEASELLKSQAKELKDAHQQQKLALQDFLE) form a coiled coil.

This is an uncharacterized protein from Homo sapiens (Human).